Here is a 216-residue protein sequence, read N- to C-terminus: Imidazole glycerol phosphate synthase subunit HisH (216 aa).

In terms of domain architecture, Glutamine amidotransferase type-1 spans 2 to 216; that stretch reads RVAIIDYGSG…LIANFLKWKP (215 aa). Cys-88 functions as the Nucleophile in the catalytic mechanism. Residues His-196 and Glu-198 contribute to the active site.

In terms of assembly, heterodimer of HisH and HisF.

The protein localises to the cytoplasm. It carries out the reaction 5-[(5-phospho-1-deoxy-D-ribulos-1-ylimino)methylamino]-1-(5-phospho-beta-D-ribosyl)imidazole-4-carboxamide + L-glutamine = D-erythro-1-(imidazol-4-yl)glycerol 3-phosphate + 5-amino-1-(5-phospho-beta-D-ribosyl)imidazole-4-carboxamide + L-glutamate + H(+). The catalysed reaction is L-glutamine + H2O = L-glutamate + NH4(+). Its pathway is amino-acid biosynthesis; L-histidine biosynthesis; L-histidine from 5-phospho-alpha-D-ribose 1-diphosphate: step 5/9. Its function is as follows. IGPS catalyzes the conversion of PRFAR and glutamine to IGP, AICAR and glutamate. The HisH subunit catalyzes the hydrolysis of glutamine to glutamate and ammonia as part of the synthesis of IGP and AICAR. The resulting ammonia molecule is channeled to the active site of HisF. The polypeptide is Imidazole glycerol phosphate synthase subunit HisH (Brucella abortus biovar 1 (strain 9-941)).